The following is a 369-amino-acid chain: Endophilin-A (369 aa).

A BAR domain is found at 18–248 (TEKMGGAEGT…LQEKRSEAES (231 aa)). Positions 227–247 (QCADVLRGLQETLQEKRSEAE) form a coiled coil. The segment covering 275-294 (GTPSHISSSASPLPSPMRSP) has biased composition (low complexity). A disordered region spans residues 275–296 (GTPSHISSSASPLPSPMRSPAK). Residues 305 to 364 (QQQPCCQALYDFDPENPGELGFKENDIITLLNRVDDNWYEGAVNGRTGYFPQSYVQVQVP) form the SH3 domain.

Belongs to the endophilin family.

Its subcellular location is the cytoplasm. It is found in the membrane. Required presynaptically at the neuromuscular junction. Implicated in synaptic vesicle endocytosis. The sequence is that of Endophilin-A from Drosophila pseudoobscura pseudoobscura (Fruit fly).